We begin with the raw amino-acid sequence, 79 residues long: uncharacterized protein (79 aa).

This is an uncharacterized protein from Dryophytes versicolor (chameleon treefrog).